We begin with the raw amino-acid sequence, 192 residues long: Phosphoheptose isomerase (192 aa).

One can recognise an SIS domain in the interval 37-192 (ITDSFKNGGK…MMLIEFEMAK (156 aa)). 52–54 (NGG) lines the substrate pocket. 2 residues coordinate Zn(2+): H61 and E65. Substrate is bound by residues E65, 93–94 (ND), 119–121 (STS), S124, and Q172. Residues Q172 and H180 each coordinate Zn(2+).

It belongs to the SIS family. GmhA subfamily. As to quaternary structure, homotetramer. Zn(2+) is required as a cofactor.

Its subcellular location is the cytoplasm. The enzyme catalyses 2 D-sedoheptulose 7-phosphate = D-glycero-alpha-D-manno-heptose 7-phosphate + D-glycero-beta-D-manno-heptose 7-phosphate. It functions in the pathway carbohydrate biosynthesis; D-glycero-D-manno-heptose 7-phosphate biosynthesis; D-glycero-alpha-D-manno-heptose 7-phosphate and D-glycero-beta-D-manno-heptose 7-phosphate from sedoheptulose 7-phosphate: step 1/1. Functionally, catalyzes the isomerization of sedoheptulose 7-phosphate in D-glycero-D-manno-heptose 7-phosphate. This Glaesserella parasuis serovar 5 (strain SH0165) (Haemophilus parasuis) protein is Phosphoheptose isomerase.